Here is a 355-residue protein sequence, read N- to C-terminus: UDP-3-O-acylglucosamine N-acyltransferase (355 aa).

Residue His-258 is the Proton acceptor of the active site.

Belongs to the transferase hexapeptide repeat family. LpxD subfamily. Homotrimer.

The enzyme catalyses a UDP-3-O-[(3R)-3-hydroxyacyl]-alpha-D-glucosamine + a (3R)-hydroxyacyl-[ACP] = a UDP-2-N,3-O-bis[(3R)-3-hydroxyacyl]-alpha-D-glucosamine + holo-[ACP] + H(+). It functions in the pathway bacterial outer membrane biogenesis; LPS lipid A biosynthesis. Catalyzes the N-acylation of UDP-3-O-acylglucosamine using 3-hydroxyacyl-ACP as the acyl donor. Is involved in the biosynthesis of lipid A, a phosphorylated glycolipid that anchors the lipopolysaccharide to the outer membrane of the cell. The chain is UDP-3-O-acylglucosamine N-acyltransferase from Rhizobium rhizogenes (strain K84 / ATCC BAA-868) (Agrobacterium radiobacter).